The primary structure comprises 326 residues: Acetyl-coenzyme A carboxylase carboxyl transferase subunit alpha (326 aa).

The 255-residue stretch at Gln44 to Thr298 folds into the CoA carboxyltransferase C-terminal domain.

The protein belongs to the AccA family. Acetyl-CoA carboxylase is a heterohexamer composed of biotin carboxyl carrier protein (AccB), biotin carboxylase (AccC) and two subunits each of ACCase subunit alpha (AccA) and ACCase subunit beta (AccD).

The protein localises to the cytoplasm. It carries out the reaction N(6)-carboxybiotinyl-L-lysyl-[protein] + acetyl-CoA = N(6)-biotinyl-L-lysyl-[protein] + malonyl-CoA. It functions in the pathway lipid metabolism; malonyl-CoA biosynthesis; malonyl-CoA from acetyl-CoA: step 1/1. Functionally, component of the acetyl coenzyme A carboxylase (ACC) complex. First, biotin carboxylase catalyzes the carboxylation of biotin on its carrier protein (BCCP) and then the CO(2) group is transferred by the carboxyltransferase to acetyl-CoA to form malonyl-CoA. In Synechocystis sp. (strain ATCC 27184 / PCC 6803 / Kazusa), this protein is Acetyl-coenzyme A carboxylase carboxyl transferase subunit alpha.